The following is a 46-amino-acid chain: Cysteine-rich venom protein asurin-1 (46 aa).

Belongs to the CRISP family. In terms of processing, contains 8 disulfide bonds. Expressed by the venom gland.

Its subcellular location is the secreted. Blocks contraction of smooth muscle elicited by high potassium-induced depolarization, but does not block caffeine-stimulated contraction. May target voltage-gated calcium channels on smooth muscle. The sequence is that of Cysteine-rich venom protein asurin-1 from Austrelaps superbus (Lowland copperhead snake).